The chain runs to 393 residues: NADH-quinone oxidoreductase subunit D 2 (393 aa).

Belongs to the complex I 49 kDa subunit family. NDH-1 is composed of 14 different subunits. Subunits NuoB, C, D, E, F, and G constitute the peripheral sector of the complex.

It is found in the cell inner membrane. The catalysed reaction is a quinone + NADH + 5 H(+)(in) = a quinol + NAD(+) + 4 H(+)(out). In terms of biological role, NDH-1 shuttles electrons from NADH, via FMN and iron-sulfur (Fe-S) centers, to quinones in the respiratory chain. The immediate electron acceptor for the enzyme in this species is believed to be a menaquinone. Couples the redox reaction to proton translocation (for every two electrons transferred, four hydrogen ions are translocated across the cytoplasmic membrane), and thus conserves the redox energy in a proton gradient. The chain is NADH-quinone oxidoreductase subunit D 2 from Cytophaga hutchinsonii (strain ATCC 33406 / DSM 1761 / CIP 103989 / NBRC 15051 / NCIMB 9469 / D465).